Here is a 241-residue protein sequence, read N- to C-terminus: dTTP/UTP pyrophosphatase (241 aa).

Phosphoserine is present on serine 38. Aspartate 105 (proton acceptor) is an active-site residue.

Belongs to the Maf family. YhdE subfamily. A divalent metal cation serves as cofactor.

It localises to the cytoplasm. The protein resides in the nucleus. It carries out the reaction dTTP + H2O = dTMP + diphosphate + H(+). The catalysed reaction is UTP + H2O = UMP + diphosphate + H(+). Its function is as follows. Nucleoside triphosphate pyrophosphatase that hydrolyzes dTTP and UTP. May have a dual role in cell division arrest and in preventing the incorporation of modified nucleotides into cellular nucleic acids. This is dTTP/UTP pyrophosphatase from Schizosaccharomyces pombe (strain 972 / ATCC 24843) (Fission yeast).